We begin with the raw amino-acid sequence, 542 residues long: uncharacterized protein (542 aa).

5 helical membrane passes run 4 to 23 (FVEN…LLLG), 28 to 47 (FGFR…FSTI), 51 to 70 (ITVP…YTIG), 91 to 113 (LALG…LGLA), and 160 to 182 (YSLT…GGLF). RCK C-terminal domains are found at residues 190–272 (AKNA…LLGE) and 274–355 (VDGH…IFGD). Helical transmembrane passes span 363 to 385 (FNLV…EFPL), 390 to 412 (ALSL…MGRT), 425 to 447 (LALR…GAGF), 457 to 479 (LLII…VIGH), and 519 to 541 (YTSV…LFLL).

Belongs to the AAE transporter (TC 2.A.81) family.

It localises to the cell membrane. This is an uncharacterized protein from Corynebacterium efficiens (strain DSM 44549 / YS-314 / AJ 12310 / JCM 11189 / NBRC 100395).